The chain runs to 600 residues: MNNQKYIRNFSIIAHIDHGKSTLADRLIEHCGGLQAREMSQQVLDSMDIEKERGITIKAQTVRLVYKAKDGNTYYLNLMDTPGHVDFAYEVSRSLAACEGSLLVVDSTQGVEAQTLANVYQAIENDHEIVPVLNKIDLPASEPEQVKQQIKDIIGIDASEAVLISAKSGIGIDLVLEAIVNKLPPPKESSSDILKALLVDSWYDPYLGVVILVRIIDGTLRKNIRIKMMATNSVYTVENVGYFTPKKHISDVLHAGEIGFFTASIKQVADCKVGDTITDEKKPCEQALPGFKPNLPVVFCGLYPTDSAEFEHLKDSLAKLRLNDASFEYEMESSSALGVGFRCGFLGLLHLEIIQERLSREFDLDLITTAPSVVYKIHMRDGESLEIHNPADLSDLQKIESMEEPWIKATIMVPDEFLGAVLSLCTEKRGVQLDHSYIANRAKIIYKLPLNEIVYDFYDRLKSCSKGYASFEWQMDVYEPSELVKLGILVNGEEVDALSTIVHRSRAEQRGRALCVRLKDLIPRQQIDIAIQASIGSRIIARETIKALRKDVLSKCYGGDISRKRKLLEKQKAGKKRMRQYGNIEIPQSAFIAALKIGDE.

The tr-type G domain occupies 5-187 (KYIRNFSIIA…AIVNKLPPPK (183 aa)). Residues 17–22 (DHGKST) and 134–137 (NKID) contribute to the GTP site.

This sequence belongs to the TRAFAC class translation factor GTPase superfamily. Classic translation factor GTPase family. LepA subfamily.

Its subcellular location is the cell inner membrane. The enzyme catalyses GTP + H2O = GDP + phosphate + H(+). In terms of biological role, required for accurate and efficient protein synthesis under certain stress conditions. May act as a fidelity factor of the translation reaction, by catalyzing a one-codon backward translocation of tRNAs on improperly translocated ribosomes. Back-translocation proceeds from a post-translocation (POST) complex to a pre-translocation (PRE) complex, thus giving elongation factor G a second chance to translocate the tRNAs correctly. Binds to ribosomes in a GTP-dependent manner. This Rickettsia felis (strain ATCC VR-1525 / URRWXCal2) (Rickettsia azadi) protein is Elongation factor 4.